Here is a 185-residue protein sequence, read N- to C-terminus: Segregation and condensation protein B (185 aa).

Belongs to the ScpB family. In terms of assembly, homodimer. Homodimerization may be required to stabilize the binding of ScpA to the Smc head domains. Component of a cohesin-like complex composed of ScpA, ScpB and the Smc homodimer, in which ScpA and ScpB bind to the head domain of Smc. The presence of the three proteins is required for the association of the complex with DNA.

It is found in the cytoplasm. In terms of biological role, participates in chromosomal partition during cell division. May act via the formation of a condensin-like complex containing Smc and ScpA that pull DNA away from mid-cell into both cell halves. The polypeptide is Segregation and condensation protein B (Alkaliphilus oremlandii (strain OhILAs) (Clostridium oremlandii (strain OhILAs))).